The sequence spans 420 residues: Serine hydroxymethyltransferase (420 aa).

(6S)-5,6,7,8-tetrahydrofolate-binding positions include L121 and 125-127 (GHL). The residue at position 230 (K230) is an N6-(pyridoxal phosphate)lysine. Residue 354–356 (SPF) coordinates (6S)-5,6,7,8-tetrahydrofolate.

It belongs to the SHMT family. Homodimer. Requires pyridoxal 5'-phosphate as cofactor.

Its subcellular location is the cytoplasm. It carries out the reaction (6R)-5,10-methylene-5,6,7,8-tetrahydrofolate + glycine + H2O = (6S)-5,6,7,8-tetrahydrofolate + L-serine. The protein operates within one-carbon metabolism; tetrahydrofolate interconversion. It functions in the pathway amino-acid biosynthesis; glycine biosynthesis; glycine from L-serine: step 1/1. Functionally, catalyzes the reversible interconversion of serine and glycine with tetrahydrofolate (THF) serving as the one-carbon carrier. This reaction serves as the major source of one-carbon groups required for the biosynthesis of purines, thymidylate, methionine, and other important biomolecules. Also exhibits THF-independent aldolase activity toward beta-hydroxyamino acids, producing glycine and aldehydes, via a retro-aldol mechanism. The sequence is that of Serine hydroxymethyltransferase from Rickettsia africae (strain ESF-5).